We begin with the raw amino-acid sequence, 125 residues long: Holo-[acyl-carrier-protein] synthase (125 aa).

Mg(2+) contacts are provided by D8 and E57.

The protein belongs to the P-Pant transferase superfamily. AcpS family. It depends on Mg(2+) as a cofactor.

The protein resides in the cytoplasm. It carries out the reaction apo-[ACP] + CoA = holo-[ACP] + adenosine 3',5'-bisphosphate + H(+). In terms of biological role, transfers the 4'-phosphopantetheine moiety from coenzyme A to a Ser of acyl-carrier-protein. In Blochmanniella floridana, this protein is Holo-[acyl-carrier-protein] synthase.